The chain runs to 513 residues: Xylose import ATP-binding protein XylG (513 aa).

2 consecutive ABC transporter domains span residues 5–242 and 259–505; these read LEMK…VGRE and LRIE…LRSE. Residue 37–44 participates in ATP binding; sequence GENGSGKS.

It belongs to the ABC transporter superfamily. Xylose importer (TC 3.A.1.2.4) family. In terms of assembly, the complex is composed of two ATP-binding proteins (XylG), two transmembrane proteins (XylH) and a solute-binding protein (XylF).

It is found in the cell inner membrane. It catalyses the reaction D-xylose(out) + ATP + H2O = D-xylose(in) + ADP + phosphate + H(+). In terms of biological role, part of the ABC transporter complex XylFGH involved in xylose import. Responsible for energy coupling to the transport system. The XylFGH system can also transport ribose in absence of xylose. The protein is Xylose import ATP-binding protein XylG of Escherichia coli (strain K12).